A 221-amino-acid polypeptide reads, in one-letter code: Sentrin-specific protease 8 (221 aa).

Met1 bears the N-acetylmethionine mark. Positions Ser11–Leu174 are protease. Active-site residues include His102 and Asp119. Cys163 (nucleophile) is an active-site residue.

Belongs to the peptidase C48 family.

In terms of biological role, protease that catalyzes two essential functions in the NEDD8 pathway: processing of full-length NEDD8 to its mature form and deconjugation of NEDD8 from targeted proteins such as cullins or p53. This is Sentrin-specific protease 8 (Senp8) from Mus musculus (Mouse).